We begin with the raw amino-acid sequence, 198 residues long: Pyridoxal 5'-phosphate synthase subunit PdxT (198 aa).

49–51 (GES) lines the L-glutamine pocket. The active-site Nucleophile is the cysteine 81. L-glutamine is bound by residues arginine 113 and 141–142 (IR). Catalysis depends on charge relay system residues histidine 177 and glutamate 179.

This sequence belongs to the glutaminase PdxT/SNO family. As to quaternary structure, in the presence of PdxS, forms a dodecamer of heterodimers. Only shows activity in the heterodimer.

The catalysed reaction is aldehydo-D-ribose 5-phosphate + D-glyceraldehyde 3-phosphate + L-glutamine = pyridoxal 5'-phosphate + L-glutamate + phosphate + 3 H2O + H(+). It carries out the reaction L-glutamine + H2O = L-glutamate + NH4(+). Its pathway is cofactor biosynthesis; pyridoxal 5'-phosphate biosynthesis. Catalyzes the hydrolysis of glutamine to glutamate and ammonia as part of the biosynthesis of pyridoxal 5'-phosphate. The resulting ammonia molecule is channeled to the active site of PdxS. This Mycobacterium avium (strain 104) protein is Pyridoxal 5'-phosphate synthase subunit PdxT.